We begin with the raw amino-acid sequence, 1645 residues long: Protein MON2 homolog (1645 aa).

It belongs to the MON2 family.

Functionally, may be required for traffic between late Golgi and early endosomes. The protein is Protein MON2 homolog of Caenorhabditis briggsae.